Reading from the N-terminus, the 254-residue chain is Type III pantothenate kinase (254 aa).

Aspartate 6–valine 13 is a binding site for ATP. Residues tyrosine 100 and glycine 107–arginine 110 each bind substrate. Aspartate 109 (proton acceptor) is an active-site residue. Aspartate 129 is a binding site for K(+). Threonine 132 serves as a coordination point for ATP. Substrate is bound at residue threonine 184.

Belongs to the type III pantothenate kinase family. In terms of assembly, homodimer. Requires NH4(+) as cofactor. K(+) serves as cofactor.

It is found in the cytoplasm. It carries out the reaction (R)-pantothenate + ATP = (R)-4'-phosphopantothenate + ADP + H(+). It participates in cofactor biosynthesis; coenzyme A biosynthesis; CoA from (R)-pantothenate: step 1/5. In terms of biological role, catalyzes the phosphorylation of pantothenate (Pan), the first step in CoA biosynthesis. The protein is Type III pantothenate kinase of Halalkalibacterium halodurans (strain ATCC BAA-125 / DSM 18197 / FERM 7344 / JCM 9153 / C-125) (Bacillus halodurans).